Consider the following 132-residue polypeptide: Small ribosomal subunit protein uS8 (132 aa).

The protein belongs to the universal ribosomal protein uS8 family. Part of the 30S ribosomal subunit. Contacts proteins S5 and S12.

Functionally, one of the primary rRNA binding proteins, it binds directly to 16S rRNA central domain where it helps coordinate assembly of the platform of the 30S subunit. The chain is Small ribosomal subunit protein uS8 from Azorhizobium caulinodans (strain ATCC 43989 / DSM 5975 / JCM 20966 / LMG 6465 / NBRC 14845 / NCIMB 13405 / ORS 571).